Here is a 576-residue protein sequence, read N- to C-terminus: Protein alan shepard (576 aa).

A compositionally biased stretch (pro residues) spans 1–12; sequence MHPRYSPAPPPQ. The segment at 1-66 is disordered; it reads MHPRYSPAPP…GSSSSAAAAP (66 aa). Tyr-5 is subject to Phosphotyrosine. The segment covering 13 to 24 has biased composition (low complexity); sequence QQQQMGGPPHQQ. Gly residues predominate over residues 25-35; the sequence is QGGGGGGGGNM. Residues 37–54 are compositionally biased toward polar residues; it reads GPSNAQQLPPQIPRSQNY. Over residues 55–66 the composition is skewed to low complexity; it reads SNGSSSSAAAAP. Phosphotyrosine is present on residues Tyr-125 and Tyr-142. The segment at 164-225 is disordered; it reads PATTTYGQRV…TVQNQNQQGG (62 aa). The segment covering 178 to 225 has biased composition (low complexity); the sequence is SPSNTNSSSSSNTGSQSGTLSTSLSNTTNTNTNMGPNGTVQNQNQQGG. 2 consecutive RRM domains span residues 231–302 and 308–387; these read TNLY…MAKQ and TNLY…FADG. Positions 538–576 are disordered; the sequence is YAPPPTIIPTMPMTDSEQASTAASPDEAYTQYPHQAAPK.

Functionally, has a role in the perception of gravity. The polypeptide is Protein alan shepard (Drosophila simulans (Fruit fly)).